The sequence spans 186 residues: Peptidoglycan-recognition protein SD (186 aa).

Positions 1–18 (MTWIGLLIVGLTAIAVQG) are cleaved as a signal peptide. The 123-residue stretch at 47-169 (AVIAHTAGGA…RQVSATMSPG (123 aa)) folds into the N-acetylmuramoyl-L-alanine amidase domain. Residues Cys57 and Cys63 are joined by a disulfide bond. Residue Asn181 is glycosylated (N-linked (GlcNAc...) asparagine).

This sequence belongs to the N-acetylmuramoyl-L-alanine amidase 2 family.

Its subcellular location is the secreted. Functionally, peptidoglycan-recognition protein that plays a key role in innate immunity by binding to peptidoglycans (PGN) of Gram-positive bacteria and activating the Toll pathway. Has no activity against on Gram-negative bacteria and fungi. Shows some partial redundancy with PRPGP-SA in Gram-positive bacteria recognition. May act by activating the proteolytic cleavage of Spatzle and the subsequent activation of Toll pathway. Recognizes S.aureus PGN. This is Peptidoglycan-recognition protein SD (PGRP-SD) from Drosophila simulans (Fruit fly).